Reading from the N-terminus, the 628-residue chain is 1-deoxy-D-xylulose-5-phosphate synthase (628 aa).

Thiamine diphosphate is bound by residues His72 and 113 to 115 (GHS). Asp144 is a binding site for Mg(2+). Thiamine diphosphate is bound by residues 145–146 (GA), Asn173, Tyr284, and Glu367. Asn173 contributes to the Mg(2+) binding site.

This sequence belongs to the transketolase family. DXPS subfamily. As to quaternary structure, homodimer. Mg(2+) is required as a cofactor. Requires thiamine diphosphate as cofactor.

It catalyses the reaction D-glyceraldehyde 3-phosphate + pyruvate + H(+) = 1-deoxy-D-xylulose 5-phosphate + CO2. It functions in the pathway metabolic intermediate biosynthesis; 1-deoxy-D-xylulose 5-phosphate biosynthesis; 1-deoxy-D-xylulose 5-phosphate from D-glyceraldehyde 3-phosphate and pyruvate: step 1/1. Catalyzes the acyloin condensation reaction between C atoms 2 and 3 of pyruvate and glyceraldehyde 3-phosphate to yield 1-deoxy-D-xylulose-5-phosphate (DXP). The chain is 1-deoxy-D-xylulose-5-phosphate synthase from Exiguobacterium sibiricum (strain DSM 17290 / CCUG 55495 / CIP 109462 / JCM 13490 / 255-15).